The chain runs to 1059 residues: Carbamoyl phosphate synthase large chain (1059 aa).

Residues 1–401 are carboxyphosphate synthetic domain; the sequence is MPKRTDIHKI…ALLKAVASLE (401 aa). ATP is bound by residues Arg-129, Arg-169, Gly-175, Gly-176, Lys-208, Ile-210, Glu-215, Gly-241, Ile-242, His-243, Gln-284, and Glu-298. Residues 133-327 form the ATP-grasp 1 domain; it reads KELMQELGEP…IAKLAAKIAV (195 aa). 3 residues coordinate Mg(2+): Gln-284, Glu-298, and Asn-300. The Mn(2+) site is built by Gln-284, Glu-298, and Asn-300. The tract at residues 402–546 is oligomerization domain; that stretch reads IDQKDLLSKE…YSTYETENES (145 aa). The tract at residues 547-929 is carbamoyl phosphate synthetic domain; sequence RRSAKPSVLV…ALYKAFAGAG (383 aa). Positions 671-861 constitute an ATP-grasp 2 domain; the sequence is DQVIKDLNLR…MAQLATKVIL (191 aa). ATP-binding residues include Arg-707, Ala-746, Leu-748, Glu-752, Gly-777, Val-778, His-779, Ser-780, Gln-820, and Glu-832. Positions 820, 832, and 834 each coordinate Mg(2+). Gln-820, Glu-832, and Asn-834 together coordinate Mn(2+). Residues 930–1059 enclose the MGS-like domain; sequence MEVPDNGAVL…EMTSFKTTEL (130 aa). The segment at 930-1059 is allosteric domain; it reads MEVPDNGAVL…EMTSFKTTEL (130 aa).

The protein belongs to the CarB family. Composed of two chains; the small (or glutamine) chain promotes the hydrolysis of glutamine to ammonia, which is used by the large (or ammonia) chain to synthesize carbamoyl phosphate. Tetramer of heterodimers (alpha,beta)4. It depends on Mg(2+) as a cofactor. Mn(2+) serves as cofactor.

The enzyme catalyses hydrogencarbonate + L-glutamine + 2 ATP + H2O = carbamoyl phosphate + L-glutamate + 2 ADP + phosphate + 2 H(+). It catalyses the reaction hydrogencarbonate + NH4(+) + 2 ATP = carbamoyl phosphate + 2 ADP + phosphate + 2 H(+). It participates in amino-acid biosynthesis; L-arginine biosynthesis; carbamoyl phosphate from bicarbonate: step 1/1. The protein operates within pyrimidine metabolism; UMP biosynthesis via de novo pathway; (S)-dihydroorotate from bicarbonate: step 1/3. In terms of biological role, large subunit of the glutamine-dependent carbamoyl phosphate synthetase (CPSase). CPSase catalyzes the formation of carbamoyl phosphate from the ammonia moiety of glutamine, carbonate, and phosphate donated by ATP, constituting the first step of 2 biosynthetic pathways, one leading to arginine and/or urea and the other to pyrimidine nucleotides. The large subunit (synthetase) binds the substrates ammonia (free or transferred from glutamine from the small subunit), hydrogencarbonate and ATP and carries out an ATP-coupled ligase reaction, activating hydrogencarbonate by forming carboxy phosphate which reacts with ammonia to form carbamoyl phosphate. The polypeptide is Carbamoyl phosphate synthase large chain (Limosilactobacillus fermentum (strain NBRC 3956 / LMG 18251) (Lactobacillus fermentum)).